A 635-amino-acid chain; its full sequence is Extracellular metalloproteinase mep (635 aa).

The first 19 residues, M1–A19, serve as a signal peptide directing secretion. The propeptide occupies H20–E246. N-linked (GlcNAc...) asparagine glycosylation occurs at N287. A compositionally biased stretch (polar residues) spans T290–L309. A disordered region spans residues T290–N311. H430 provides a ligand contact to Zn(2+). E431 is an active-site residue. H434 is a Zn(2+) binding site.

Belongs to the peptidase M36 family. Zn(2+) serves as cofactor.

The protein resides in the secreted. Secreted metalloproteinase that allows assimilation of proteinaceous substrates. This is Extracellular metalloproteinase mep (mep) from Aspergillus flavus (strain ATCC 200026 / FGSC A1120 / IAM 13836 / NRRL 3357 / JCM 12722 / SRRC 167).